The chain runs to 446 residues: Protein adenylyltransferase FICD (446 aa).

Topologically, residues 1–18 (MAVTECEWASLGSRIGLR) are cytoplasmic. Residues 19-39 (AALVLLSGSLLVVLFPLSGLE) traverse the membrane as a helical; Signal-anchor for type II membrane protein segment. At 40–446 (HQYRTALNIL…ECKQTITIKT (407 aa)) the chain is on the lumenal side. TPR repeat units lie at residues 94 to 127 (AKAA…DPDH) and 128 to 161 (VDAL…SPHN). Positions 218-223 (TVAIEG) match the Inhibitory (S/T)XXXE(G/N) motif motif. An ATP-binding site is contributed by glutamate 222. A glycan (N-linked (GlcNAc...) asparagine) is linked at asparagine 263. Residues 273 to 408 (VTIDNILEIH…VRPFIRFIAK (136 aa)) form the Fido domain. Position 304–307 (304–307 (VGHH)) interacts with ATP. The active site involves histidine 351. ATP is bound by residues 355 to 362 (DGNGRTSR), 387 to 388 (YY), and asparagine 395.

Belongs to the fic family. Homodimer. It depends on Mg(2+) as a cofactor. The cofactor is Mn(2+).

The protein resides in the endoplasmic reticulum membrane. It catalyses the reaction L-tyrosyl-[protein] + ATP = O-(5'-adenylyl)-L-tyrosyl-[protein] + diphosphate. The catalysed reaction is 3-O-(5'-adenylyl)-L-threonyl-[protein] + H2O = L-threonyl-[protein] + AMP + H(+). It carries out the reaction L-threonyl-[protein] + ATP = 3-O-(5'-adenylyl)-L-threonyl-[protein] + diphosphate. Its activity is regulated as follows. The side chain of Glu-222 determines which of the two opposing activities (AMPylase or de-AMPylase) will take place. In response to endoplasmic reticulum stress, mediates de-AMPylase activity. Adenylyltransferase activity is inhibited by the inhibitory helix present at the N-terminus: Glu-222 binds ATP and competes with ATP-binding at Arg-362, thereby preventing adenylyltransferase activity. In unstressed cells, disengagement of Glu-222 promotes adenylyltransferase activity. Activation dissociates ATP-binding from Glu-222, allowing ordered binding of the entire ATP moiety with the alpha-phosphate in an orientation that is productive for accepting an incoming target hydroxyl side chain. In terms of biological role, protein that can both mediate the addition of adenosine 5'-monophosphate (AMP) to specific residues of target proteins (AMPylation), and the removal of the same modification from target proteins (de-AMPylation), depending on the context. The side chain of Glu-222 determines which of the two opposing activities (AMPylase or de-AMPylase) will take place. Acts as a key regulator of the ERN1/IRE1-mediated unfolded protein response (UPR) by mediating AMPylation or de-AMPylation of HSPA5/BiP. In unstressed cells, acts as an adenylyltransferase by mediating AMPylation of HSPA5/BiP at 'Thr-518', thereby inactivating it. In response to endoplasmic reticulum stress, acts as a phosphodiesterase by mediating removal of ATP (de-AMPylation) from HSPA5/BiP at 'Thr-518', leading to restore HSPA5/BiP activity. The protein is Protein adenylyltransferase FICD of Xenopus tropicalis (Western clawed frog).